Here is a 698-residue protein sequence, read N- to C-terminus: Elongation factor G (698 aa).

Residues 8–290 (ERYRNIGISA…AVIELLPSPT (283 aa)) enclose the tr-type G domain. GTP-binding positions include 17-24 (AHIDAGKT), 88-92 (DTPGH), and 142-145 (NKMD).

It belongs to the TRAFAC class translation factor GTPase superfamily. Classic translation factor GTPase family. EF-G/EF-2 subfamily.

The protein resides in the cytoplasm. Its function is as follows. Catalyzes the GTP-dependent ribosomal translocation step during translation elongation. During this step, the ribosome changes from the pre-translocational (PRE) to the post-translocational (POST) state as the newly formed A-site-bound peptidyl-tRNA and P-site-bound deacylated tRNA move to the P and E sites, respectively. Catalyzes the coordinated movement of the two tRNA molecules, the mRNA and conformational changes in the ribosome. The polypeptide is Elongation factor G (Chromobacterium violaceum (strain ATCC 12472 / DSM 30191 / JCM 1249 / CCUG 213 / NBRC 12614 / NCIMB 9131 / NCTC 9757 / MK)).